The following is a 447-amino-acid chain: NADP-specific glutamate dehydrogenase (447 aa).

Residues K92, Q113, and K116 each contribute to the substrate site. K128 acts as the Proton donor in catalysis. A substrate-binding site is contributed by G167. 2 residues coordinate NADP(+): T212 and N243. S379 contacts substrate.

It belongs to the Glu/Leu/Phe/Val dehydrogenases family. In terms of assembly, homohexamer.

It carries out the reaction L-glutamate + NADP(+) + H2O = 2-oxoglutarate + NH4(+) + NADPH + H(+). Functionally, catalyzes the reversible oxidative deamination of glutamate to alpha-ketoglutarate and ammonia. This Corynebacterium glutamicum (strain ATCC 13032 / DSM 20300 / JCM 1318 / BCRC 11384 / CCUG 27702 / LMG 3730 / NBRC 12168 / NCIMB 10025 / NRRL B-2784 / 534) protein is NADP-specific glutamate dehydrogenase (gdh).